The chain runs to 345 residues: Biotin synthase (345 aa).

Residues 38 to 256 (RQVQVSTLLS…IAVARIMMPS (219 aa)) form the Radical SAM core domain. Positions 53, 57, and 60 each coordinate [4Fe-4S] cluster. [2Fe-2S] cluster is bound by residues C97, C128, C188, and R260.

The protein belongs to the radical SAM superfamily. Biotin synthase family. Homodimer. Requires [4Fe-4S] cluster as cofactor. The cofactor is [2Fe-2S] cluster.

The enzyme catalyses (4R,5S)-dethiobiotin + (sulfur carrier)-SH + 2 reduced [2Fe-2S]-[ferredoxin] + 2 S-adenosyl-L-methionine = (sulfur carrier)-H + biotin + 2 5'-deoxyadenosine + 2 L-methionine + 2 oxidized [2Fe-2S]-[ferredoxin]. It participates in cofactor biosynthesis; biotin biosynthesis; biotin from 7,8-diaminononanoate: step 2/2. In terms of biological role, catalyzes the conversion of dethiobiotin (DTB) to biotin by the insertion of a sulfur atom into dethiobiotin via a radical-based mechanism. The sequence is that of Biotin synthase from Yersinia pestis bv. Antiqua (strain Antiqua).